Consider the following 150-residue polypeptide: Group IIC secretory phospholipase A2 (150 aa).

The first 20 residues, 1–20 (MKGIAVFLVFIFCWTTSTLS), serve as a signal peptide directing secretion. Intrachain disulfides connect C46–C143, C48–C64, C63–C121, C69–C150, C70–C114, C79–C107, C97–C112, and C99–C105. Ca(2+) contacts are provided by Y47, G49, and G51. Residue H67 is part of the active site. A Ca(2+)-binding site is contributed by D68. N92 carries N-linked (GlcNAc...) asparagine glycosylation. Residue D115 is part of the active site.

This sequence belongs to the phospholipase A2 family. Ca(2+) serves as cofactor.

The protein localises to the secreted. It carries out the reaction a 1,2-diacyl-sn-glycero-3-phosphocholine + H2O = a 1-acyl-sn-glycero-3-phosphocholine + a fatty acid + H(+). PA2 catalyzes the calcium-dependent hydrolysis of the 2-acyl groups in 3-sn-phosphoglycerides. The protein is Group IIC secretory phospholipase A2 (Pla2g2c) of Rattus norvegicus (Rat).